Consider the following 485-residue polypeptide: Peroxisomal catalase (485 aa).

Catalysis depends on residues H53 and N126. A heme-binding site is contributed by Y336.

Belongs to the catalase family. Homotetramer. Heme serves as cofactor.

It localises to the peroxisome matrix. It catalyses the reaction 2 H2O2 = O2 + 2 H2O. In terms of biological role, catalyzes the degradation of hydrogen peroxide (H(2)O(2)) generated by peroxisomal oxidases to water and oxygen, thereby protecting cells from the toxic effects of hydrogen peroxide. In Candida tropicalis (Yeast), this protein is Peroxisomal catalase (POX9).